The sequence spans 529 residues: Delayed-rectifier potassium channel regulatory subunit KCNS1 (529 aa).

Residues 1-217 (MLMLLVRGTH…LTMENPGYSL (217 aa)) lie on the Cytoplasmic side of the membrane. A helical membrane pass occupies residues 218-239 (PSKLFSCVSISVVLASIAAMCI). Residues 240 to 270 (HSLPEYQAREAAAAVAAVAAGRSPEGVRDDP) are Extracellular-facing. The chain crosses the membrane as a helical span at residues 271 to 293 (VLRRLEYFCIAWFSFEVSSRLLL). Topologically, residues 294–304 (APSTRNFFCHP) are cytoplasmic. A helical membrane pass occupies residues 305-322 (LNLIDIVSVLPFYLTLLA). Topologically, residues 323–340 (GVALGDQGGTGGKELGHL) are extracellular. The helical; Voltage-sensor transmembrane segment at 341–361 (GKVVQVFRLMRIFRVLKLARH) threads the bilayer. Over 362–376 (STGLRSLGATLKHSY) the chain is Cytoplasmic. The helical transmembrane segment at 377–398 (REVGILLLYLAVGVSVFSGVAY) threads the bilayer. The Extracellular portion of the chain corresponds to 399 to 411 (TAEKEEDVGFNTI). Residues 412 to 423 (PACWWWGTVSMT) constitute an intramembrane region (helical). The Selectivity filter motif lies at 424–429 (TVGYGD). An intramembrane segment occupies 424–431 (TVGYGDVV). The Extracellular segment spans residues 432 to 438 (PVTVAGK). A helical membrane pass occupies residues 439-467 (LAASGCILGGILVVALPITIIFNKFSHFY). Over 468–529 (RRQKALEAAV…PSEPPHPQMY (62 aa)) the chain is Cytoplasmic. Positions 494 to 529 (GVSEASLETSRETSQEGRSADLETQAPSEPPHPQMY) are disordered. A compositionally biased stretch (basic and acidic residues) spans 502–514 (TSRETSQEGRSAD).

Belongs to the potassium channel family. S (TC 1.A.1.2) subfamily. Kv9.1/KCNS1 sub-subfamily. In terms of assembly, heterotetramer with KCNB1. Heterotetramer with KCNB2. Does not form homomultimers.

It is found in the cell membrane. Its function is as follows. Potassium channel regulatory subunit that modulate the delayed rectifier voltage-gated potassium channel activity of KCNB1 and KCNB2 by altering their kinetics, expression levels, and shifting the half-inactivation potential to more polarized values. While it does not form functional channels on its own, it can form functional heterotetrameric channels with KCNB1 and KCNB2. Each regulatory subunit has unique regulatory properties that can lead to extensive inhibition, significant changes in kinetics, and/or substantial shifts in the voltage dependencies of the inactivation process. This is Delayed-rectifier potassium channel regulatory subunit KCNS1 from Chlorocebus aethiops (Green monkey).